The primary structure comprises 126 residues: Large ribosomal subunit protein bL12 (126 aa).

Belongs to the bacterial ribosomal protein bL12 family. Homodimer. Part of the ribosomal stalk of the 50S ribosomal subunit. Forms a multimeric L10(L12)X complex, where L10 forms an elongated spine to which 2 to 4 L12 dimers bind in a sequential fashion. Binds GTP-bound translation factors.

In terms of biological role, forms part of the ribosomal stalk which helps the ribosome interact with GTP-bound translation factors. Is thus essential for accurate translation. This Bifidobacterium longum subsp. infantis (strain ATCC 15697 / DSM 20088 / JCM 1222 / NCTC 11817 / S12) protein is Large ribosomal subunit protein bL12.